Consider the following 411-residue polypeptide: Na(+)-translocating NADH-quinone reductase subunit F (411 aa).

Residues 5–25 (VILALGIAAFTVIVLVLVAII) form a helical membrane-spanning segment. The 2Fe-2S ferredoxin-type domain maps to 36–130 (GDITIDINDD…NMEVELPEEI (95 aa)). Cys73, Cys79, Cys82, and Cys114 together coordinate [2Fe-2S] cluster. In terms of domain architecture, FAD-binding FR-type spans 133–273 (VKKWECTVIS…SGPFGEFFAK (141 aa)).

Belongs to the NqrF family. As to quaternary structure, composed of six subunits; NqrA, NqrB, NqrC, NqrD, NqrE and NqrF. [2Fe-2S] cluster serves as cofactor. FAD is required as a cofactor.

The protein localises to the cell inner membrane. The catalysed reaction is a ubiquinone + n Na(+)(in) + NADH + H(+) = a ubiquinol + n Na(+)(out) + NAD(+). NQR complex catalyzes the reduction of ubiquinone-1 to ubiquinol by two successive reactions, coupled with the transport of Na(+) ions from the cytoplasm to the periplasm. The first step is catalyzed by NqrF, which accepts electrons from NADH and reduces ubiquinone-1 to ubisemiquinone by a one-electron transfer pathway. The protein is Na(+)-translocating NADH-quinone reductase subunit F of Haemophilus influenzae (strain 86-028NP).